The sequence spans 499 residues: Pyruvate kinase 2 (499 aa).

R50 is a binding site for substrate. Residues N52, S54, D84, and T85 each coordinate K(+). An ATP-binding site is contributed by 52-55; the sequence is NFSH. R91 contributes to the ATP binding site. E241 is a Mg(2+) binding site. Substrate contacts are provided by G264, D265, and T297. Residue D265 participates in Mg(2+) binding.

Belongs to the pyruvate kinase family. Homotetramer. It depends on Mg(2+) as a cofactor. K(+) serves as cofactor.

It catalyses the reaction pyruvate + ATP = phosphoenolpyruvate + ADP + H(+). It functions in the pathway carbohydrate degradation; glycolysis; pyruvate from D-glyceraldehyde 3-phosphate: step 5/5. Its activity is regulated as follows. Activated by fructose 2,6-bisphosphate, activated by the effector in a cooperative manner. The polypeptide is Pyruvate kinase 2 (PYK2) (Trypanosoma brucei brucei).